We begin with the raw amino-acid sequence, 331 residues long: MTKANHHIFADGELSRKEGTLRIDTLEGETKYLPVESIDALYLHGQISFNTRALGLLNKHGVPVHIFGWKDYYRGSYLPKRSQLSGNTVVEQVRAYDNTERRLRIGHRIIEASIHNMRANLQYYSGRRGDFDSVVETLRELKTAVSDTQRIDELRAVEGDARKRYYDCFDSILEAPFRLAKREYNPPSNETNALISFLNGMVYTSCVSAIRKTALDPTVGFVHEPGERRFTLSLDIADIFKPILADRLVFRLVNRKQITTDDFETELAGCLLTEQGRLTVLEEFERSLDQTVQHPRLKRKVSFKTLIQTDVYSLKKHLLTGEPYHATEKWW.

Glu158, His223, and Asp238 together coordinate Mn(2+).

It belongs to the CRISPR-associated endonuclease Cas1 family. Homodimer, forms a heterotetramer with a Cas2 homodimer. It depends on Mg(2+) as a cofactor. The cofactor is Mn(2+).

Functionally, CRISPR (clustered regularly interspaced short palindromic repeat), is an adaptive immune system that provides protection against mobile genetic elements (viruses, transposable elements and conjugative plasmids). CRISPR clusters contain spacers, sequences complementary to antecedent mobile elements, and target invading nucleic acids. CRISPR clusters are transcribed and processed into CRISPR RNA (crRNA). Acts as a dsDNA endonuclease. Involved in the integration of spacer DNA into the CRISPR cassette. Plasmid targeted by CRISPR locus P1 transform wild-type cells very poorly. The polypeptide is CRISPR-associated endonuclease Cas1 (Haloferax volcanii (strain ATCC 29605 / DSM 3757 / JCM 8879 / NBRC 14742 / NCIMB 2012 / VKM B-1768 / DS2) (Halobacterium volcanii)).